Reading from the N-terminus, the 346-residue chain is Zinc finger CCCH domain-containing protein 28 (346 aa).

Positions 1–99 (MASAETPNPD…SPRYPDGKRR (99 aa)) are disordered. A compositionally biased stretch (low complexity) spans 17-41 (DAAAAADPAAAAPAAAATDPAAAGS). Basic residues predominate over residues 62–86 (RSSRSRSRSPRRGRSRSRSRSRSRG). 6 C3H1-type zinc fingers span residues 103-131 (DLNVEVCRDFLRDRCARADIECKYAHPHP), 138-165 (DSKVTACADSLRNNCFRGRTCRYYHPPP), 181-209 (KVKMQVCRDFTRGRCSRSANECRFLHHSP), 211-237 (EDCAIVCQDFLRGRCDRKSCRYSHVMA), 282-308 (NYGVEVCRDYLKNMCNRESCRFAHPDL), and 314-340 (NTQVEVCRDFKRGECNRPACRFYHPPA).

The polypeptide is Zinc finger CCCH domain-containing protein 28 (Oryza sativa subsp. japonica (Rice)).